A 379-amino-acid chain; its full sequence is S-adenosylmethionine decarboxylase proenzyme (379 aa).

Catalysis depends on residues Glu-30 and Glu-33. The Schiff-base intermediate with substrate; via pyruvic acid role is filled by Ser-96. Ser-96 is subject to Pyruvic acid (Ser); by autocatalysis. Cys-110 functions as the Proton donor; for catalytic activity in the catalytic mechanism. Active-site proton acceptor; for processing activity residues include Ser-254 and His-267.

It belongs to the eukaryotic AdoMetDC family. Heterotetramer of two alpha and two beta chains. Pyruvate is required as a cofactor. In terms of processing, is synthesized initially as an inactive proenzyme. Formation of the active enzyme involves a self-maturation process in which the active site pyruvoyl group is generated from an internal serine residue via an autocatalytic post-translational modification. Two non-identical subunits are generated from the proenzyme in this reaction, and the pyruvate is formed at the N-terminus of the alpha chain, which is derived from the carboxyl end of the proenzyme. The post-translation cleavage follows an unusual pathway, termed non-hydrolytic serinolysis, in which the side chain hydroxyl group of the serine supplies its oxygen atom to form the C-terminus of the beta chain, while the remainder of the serine residue undergoes an oxidative deamination to produce ammonia and the pyruvoyl group blocking the N-terminus of the alpha chain.

It catalyses the reaction S-adenosyl-L-methionine + H(+) = S-adenosyl 3-(methylsulfanyl)propylamine + CO2. It functions in the pathway amine and polyamine biosynthesis; S-adenosylmethioninamine biosynthesis; S-adenosylmethioninamine from S-adenosyl-L-methionine: step 1/1. Functionally, S-adenosylmethionine decarboxylase is essential for the biosynthesis of spermine and spermidine. The alpha subunit contains the active site. In Dictyostelium discoideum (Social amoeba), this protein is S-adenosylmethionine decarboxylase proenzyme (amd1).